Here is a 448-residue protein sequence, read N- to C-terminus: Cysteine--tRNA ligase (448 aa).

Position 27 (Cys-27) interacts with Zn(2+). A 'HIGH' region motif is present at residues 29–39; that stretch reads PTVYNYIHVGN. The Zn(2+) site is built by Cys-210, His-235, and Glu-239. A 'KMSKS' region motif is present at residues 267-271; sequence KMSKS. Residue Lys-270 coordinates ATP.

Belongs to the class-I aminoacyl-tRNA synthetase family. Monomer. Requires Zn(2+) as cofactor.

The protein resides in the cytoplasm. It catalyses the reaction tRNA(Cys) + L-cysteine + ATP = L-cysteinyl-tRNA(Cys) + AMP + diphosphate. This is Cysteine--tRNA ligase from Lactococcus lactis subsp. cremoris (strain SK11).